The sequence spans 468 residues: 6-phosphogluconate dehydrogenase, decarboxylating (468 aa).

Residues 10–15 (GMAVMG), 33–35 (NRS), 74–76 (VKA), and Asn-102 contribute to the NADP(+) site. Substrate contacts are provided by residues Asn-102 and 128–130 (SGG). The active-site Proton acceptor is Lys-183. 186 to 187 (HN) is a substrate binding site. Glu-190 acts as the Proton donor in catalysis. The substrate site is built by Tyr-191, Lys-260, Arg-287, Arg-445, and His-451.

This sequence belongs to the 6-phosphogluconate dehydrogenase family. As to quaternary structure, homodimer.

The enzyme catalyses 6-phospho-D-gluconate + NADP(+) = D-ribulose 5-phosphate + CO2 + NADPH. The protein operates within carbohydrate degradation; pentose phosphate pathway; D-ribulose 5-phosphate from D-glucose 6-phosphate (oxidative stage): step 3/3. In terms of biological role, catalyzes the oxidative decarboxylation of 6-phosphogluconate to ribulose 5-phosphate and CO(2), with concomitant reduction of NADP to NADPH. This Escherichia coli (strain K12) protein is 6-phosphogluconate dehydrogenase, decarboxylating (gnd).